The following is a 311-amino-acid chain: 4-hydroxy-3-methylbut-2-enyl diphosphate reductase (311 aa).

Cys-12 lines the [4Fe-4S] cluster pocket. His-43 and His-81 together coordinate (2E)-4-hydroxy-3-methylbut-2-enyl diphosphate. 2 residues coordinate dimethylallyl diphosphate: His-43 and His-81. Residues His-43 and His-81 each coordinate isopentenyl diphosphate. Position 103 (Cys-103) interacts with [4Fe-4S] cluster. His-131 lines the (2E)-4-hydroxy-3-methylbut-2-enyl diphosphate pocket. His-131 contacts dimethylallyl diphosphate. Position 131 (His-131) interacts with isopentenyl diphosphate. Glu-133 (proton donor) is an active-site residue. (2E)-4-hydroxy-3-methylbut-2-enyl diphosphate is bound at residue Thr-170. Position 198 (Cys-198) interacts with [4Fe-4S] cluster. (2E)-4-hydroxy-3-methylbut-2-enyl diphosphate contacts are provided by Ser-226, Asn-228, and Ser-271. Dimethylallyl diphosphate-binding residues include Ser-226, Asn-228, and Ser-271. Positions 226, 228, and 271 each coordinate isopentenyl diphosphate.

The protein belongs to the IspH family. It depends on [4Fe-4S] cluster as a cofactor.

It catalyses the reaction isopentenyl diphosphate + 2 oxidized [2Fe-2S]-[ferredoxin] + H2O = (2E)-4-hydroxy-3-methylbut-2-enyl diphosphate + 2 reduced [2Fe-2S]-[ferredoxin] + 2 H(+). It carries out the reaction dimethylallyl diphosphate + 2 oxidized [2Fe-2S]-[ferredoxin] + H2O = (2E)-4-hydroxy-3-methylbut-2-enyl diphosphate + 2 reduced [2Fe-2S]-[ferredoxin] + 2 H(+). It participates in isoprenoid biosynthesis; dimethylallyl diphosphate biosynthesis; dimethylallyl diphosphate from (2E)-4-hydroxy-3-methylbutenyl diphosphate: step 1/1. Its pathway is isoprenoid biosynthesis; isopentenyl diphosphate biosynthesis via DXP pathway; isopentenyl diphosphate from 1-deoxy-D-xylulose 5-phosphate: step 6/6. Its function is as follows. Catalyzes the conversion of 1-hydroxy-2-methyl-2-(E)-butenyl 4-diphosphate (HMBPP) into a mixture of isopentenyl diphosphate (IPP) and dimethylallyl diphosphate (DMAPP). Acts in the terminal step of the DOXP/MEP pathway for isoprenoid precursor biosynthesis. The sequence is that of 4-hydroxy-3-methylbut-2-enyl diphosphate reductase from Brevibacillus brevis (strain 47 / JCM 6285 / NBRC 100599).